A 108-amino-acid chain; its full sequence is uncharacterized protein (108 aa).

A helical membrane pass occupies residues 15–37; that stretch reads SYYFYIFWNFFLPMFIVYRGFGL.

The protein resides in the membrane. This is an uncharacterized protein from Archaeoglobus fulgidus (strain ATCC 49558 / DSM 4304 / JCM 9628 / NBRC 100126 / VC-16).